Reading from the N-terminus, the 515-residue chain is 2-isopropylmalate synthase (515 aa).

The 263-residue stretch at 5–267 (VIIFDTTLRD…RTGINHEEIH (263 aa)) folds into the Pyruvate carboxyltransferase domain. 4 residues coordinate Mn(2+): Asp14, His202, His204, and Asn238. The segment at 392–515 (KLNYLSVQSG…EMKQKKIATV (124 aa)) is regulatory domain.

Belongs to the alpha-IPM synthase/homocitrate synthase family. LeuA type 1 subfamily. In terms of assembly, homodimer. The cofactor is Mn(2+).

The protein localises to the cytoplasm. The catalysed reaction is 3-methyl-2-oxobutanoate + acetyl-CoA + H2O = (2S)-2-isopropylmalate + CoA + H(+). The protein operates within amino-acid biosynthesis; L-leucine biosynthesis; L-leucine from 3-methyl-2-oxobutanoate: step 1/4. In terms of biological role, catalyzes the condensation of the acetyl group of acetyl-CoA with 3-methyl-2-oxobutanoate (2-ketoisovalerate) to form 3-carboxy-3-hydroxy-4-methylpentanoate (2-isopropylmalate). This chain is 2-isopropylmalate synthase, found in Vibrio vulnificus (strain CMCP6).